The primary structure comprises 955 residues: Glycine dehydrogenase (decarboxylating) (955 aa).

Residue Lys702 is modified to N6-(pyridoxal phosphate)lysine.

It belongs to the GcvP family. As to quaternary structure, the glycine cleavage system is composed of four proteins: P, T, L and H. The cofactor is pyridoxal 5'-phosphate.

The catalysed reaction is N(6)-[(R)-lipoyl]-L-lysyl-[glycine-cleavage complex H protein] + glycine + H(+) = N(6)-[(R)-S(8)-aminomethyldihydrolipoyl]-L-lysyl-[glycine-cleavage complex H protein] + CO2. Its function is as follows. The glycine cleavage system catalyzes the degradation of glycine. The P protein binds the alpha-amino group of glycine through its pyridoxal phosphate cofactor; CO(2) is released and the remaining methylamine moiety is then transferred to the lipoamide cofactor of the H protein. In Stenotrophomonas maltophilia (strain K279a), this protein is Glycine dehydrogenase (decarboxylating).